Consider the following 108-residue polypeptide: uncharacterized protein (108 aa).

A helical transmembrane segment spans residues 10 to 32 (LQAPYILCTSFITLKIHNFFFFF).

The protein resides in the membrane. This is an uncharacterized protein from Saccharomyces cerevisiae (strain ATCC 204508 / S288c) (Baker's yeast).